Here is a 76-residue protein sequence, read N- to C-terminus: Small ribosomal subunit protein bS18 (76 aa).

The protein belongs to the bacterial ribosomal protein bS18 family. As to quaternary structure, part of the 30S ribosomal subunit. Forms a tight heterodimer with protein bS6.

Functionally, binds as a heterodimer with protein bS6 to the central domain of the 16S rRNA, where it helps stabilize the platform of the 30S subunit. In Nitrosomonas europaea (strain ATCC 19718 / CIP 103999 / KCTC 2705 / NBRC 14298), this protein is Small ribosomal subunit protein bS18.